We begin with the raw amino-acid sequence, 259 residues long: 5'-nucleotidase SurE (259 aa).

Residues Asp-13, Asp-14, Ser-44, and Asn-101 each contribute to the a divalent metal cation site.

The protein belongs to the SurE nucleotidase family. The cofactor is a divalent metal cation.

Its subcellular location is the cytoplasm. The catalysed reaction is a ribonucleoside 5'-phosphate + H2O = a ribonucleoside + phosphate. Nucleotidase that shows phosphatase activity on nucleoside 5'-monophosphates. The polypeptide is 5'-nucleotidase SurE (Flavobacterium johnsoniae (strain ATCC 17061 / DSM 2064 / JCM 8514 / BCRC 14874 / CCUG 350202 / NBRC 14942 / NCIMB 11054 / UW101) (Cytophaga johnsonae)).